The sequence spans 238 residues: Urease subunit alpha (238 aa).

The tract at residues 1–102 (MKLTPKELDK…LVTVHTPIEA (102 aa)) is urease gamma. The tract at residues 103-238 (NGKLVPGELF…DDNYVKTIKE (136 aa)) is urease beta.

The protein in the N-terminal section; belongs to the urease gamma subunit family. In the C-terminal section; belongs to the urease beta subunit family. As to quaternary structure, heterohexamer of 3 UreA (alpha) and 3 UreB (beta) subunits. Four heterohexamers assemble to form a 16 nm dodecameric complex.

It carries out the reaction urea + 2 H2O + H(+) = hydrogencarbonate + 2 NH4(+). Its pathway is nitrogen metabolism; urea degradation; CO(2) and NH(3) from urea (urease route): step 1/1. This chain is Urease subunit alpha, found in Helicobacter pylori (strain J99 / ATCC 700824) (Campylobacter pylori J99).